We begin with the raw amino-acid sequence, 63 residues long: Protease 2 small chain (63 aa).

Residues 11-63 (QWGLSGTYGIRANTAWDNGYQGQGKIIAVVDTGITDHPDLLANRTSPLGYDFI) enclose the Peptidase S8 domain.

This sequence belongs to the peptidase S8 family. Heterodimer of a large and a small chain.

Its subcellular location is the secreted. This Achromobacter lyticus protein is Protease 2 small chain.